Consider the following 107-residue polypeptide: Thioredoxin (107 aa).

The region spanning valine 2 to lysine 107 is the Thioredoxin domain. Residues cysteine 32 and cysteine 35 each act as nucleophile in the active site. A disulfide bridge links cysteine 32 with cysteine 35. S-nitrosocysteine occurs at positions 71 and 75.

Belongs to the thioredoxin family. May be nitrosylated on several cysteine residues, depending on the oxidation state. Nitrosylated Cys-75 may serve as donor for nitrosylation of target proteins.

Its subcellular location is the nucleus. The protein localises to the cytoplasm. The protein resides in the secreted. Functionally, participates in various redox reactions through the reversible oxidation of its active center dithiol to a disulfide and catalyzes dithiol-disulfide exchange reactions. Plays a role in the reversible S-nitrosylation of cysteine residues in target proteins, and thereby contributes to the response to intracellular nitric oxide. Nitrosylates the active site Cys of CASP3 in response to nitric oxide (NO), and thereby inhibits caspase-3 activity. Induces the FOS/JUN AP-1 DNA binding activity in ionizing radiation (IR) cells through its oxidation/reduction status and stimulates AP-1 transcriptional activity. The polypeptide is Thioredoxin (txn) (Ictalurus punctatus (Channel catfish)).